We begin with the raw amino-acid sequence, 307 residues long: Bidirectional sugar transporter SWEET11 (307 aa).

At 1-14 the chain is on the extracellular side; sequence MAGGFLSMANPAVT. The chain crosses the membrane as a helical span at residues 15 to 35; that stretch reads LSGVAGNIISFLVFLAPVATF. The 84-residue stretch at 17 to 100 folds into the MtN3/slv 1 domain; that stretch reads GVAGNIISFL…VLYLVYAPRR (84 aa). Topologically, residues 36-47 are cytoplasmic; that stretch reads LQVYKKKSTGGY. The chain crosses the membrane as a helical span at residues 48–68; the sequence is SSVPYVVALFSSVLWIFYALV. Over 69–74 the chain is Extracellular; that stretch reads KTNSRP. Residues 75 to 95 traverse the membrane as a helical segment; that stretch reads LLTINAFGCGVEAAYIVLYLV. Topologically, residues 96–107 are cytoplasmic; it reads YAPRRARLRTLA. A helical membrane pass occupies residues 108–128; that stretch reads FFLLLDVAAFALIVVTTLYLV. The Extracellular portion of the chain corresponds to 129-135; the sequence is PKPHQVK. The helical transmembrane segment at 136–156 threads the bilayer; it reads FLGSVCLAFSMAVFVAPLSII. The MtN3/slv 2 domain occupies 136-219; that stretch reads FLGSVCLAFS…MGLYFWYRKP (84 aa). Topologically, residues 157–168 are cytoplasmic; the sequence is FKVIKTKSVEFM. A helical membrane pass occupies residues 169-189; the sequence is PIGLSVCLTLSAVAWFCYGLF. The Extracellular segment spans residues 190 to 194; sequence TKDPY. A helical transmembrane segment spans residues 195-215; that stretch reads VMYPNVGGFFFSCVQMGLYFW. Residues 216–307 lie on the Cytoplasmic side of the membrane; sequence YRKPRNTAVL…PEVIEITAAV (92 aa).

The protein belongs to the SWEET sugar transporter family. Interacts with COPT1 and COPT2. Interacts with APX8. In terms of tissue distribution, mostly expressed in panicles and anthers. Also detected in leaves (leaf collar, leaf auricle, leaf ligule), roots, sheaths, culms and culm nodes.

Its subcellular location is the cell membrane. Mediates both low-affinity uptake and efflux of sugar across the plasma membrane. Required for pollen viability. Involved in the transport of copper, in cooperation with COPT1 and COPT2. In terms of biological role, confers sensitivity to bacterial blight mediated by X.oryzae pv. oryzae (Xoo) in its Xa13 allelic form (e.g. cv. IR24), probably by providing the sugar required for the pathogen growth, or by reducing copper contents in xylem. However, a recessive resistance can be associated with the xa13 allele (in which the promoter is mutated leading to reduced induction upon pathogen infection, e.g. cv. IRBB13), specifically toward Xoo Philippine race 6 and Indian race PXO8. This chain is Bidirectional sugar transporter SWEET11 (SWEET11), found in Oryza sativa subsp. japonica (Rice).